The sequence spans 496 residues: Putative zinc finger CCCH domain-containing protein 48 (496 aa).

2 disordered regions span residues 1 to 77 and 108 to 194; these read MADS…QPVH and MGAG…HPDD. The segment covering 143–156 has biased composition (acidic residues); it reads HLAEEEEEEEEEHY. 3 C3H1-type zinc fingers span residues 377-406, 439-467, and 469-496; these read EHKTKLCAEYYSRGLGCPRGNTCKYAHGED, KYKTKLCKTFTSGGLCLFAANCRFAHGEV, and LGKKEPCWYFFSGQTCPRGDTCGFRHSY.

In Oryza sativa subsp. japonica (Rice), this protein is Putative zinc finger CCCH domain-containing protein 48.